The chain runs to 115 residues: Probable 4-amino-4-deoxy-L-arabinose-phosphoundecaprenol flippase subunit ArnE (115 aa).

3 helical membrane passes run 42–62 (PWPW…LLLL), 65–85 (VEVG…TLAA), and 93–112 (VDRR…ALLG). The EamA domain occupies 46-113 (LALLALGLGL…IVAGVALLGR (68 aa)).

It belongs to the ArnE family. In terms of assembly, heterodimer of ArnE and ArnF.

The protein localises to the cell inner membrane. The protein operates within bacterial outer membrane biogenesis; lipopolysaccharide biosynthesis. Its function is as follows. Translocates 4-amino-4-deoxy-L-arabinose-phosphoundecaprenol (alpha-L-Ara4N-phosphoundecaprenol) from the cytoplasmic to the periplasmic side of the inner membrane. The chain is Probable 4-amino-4-deoxy-L-arabinose-phosphoundecaprenol flippase subunit ArnE from Pseudomonas aeruginosa (strain LESB58).